Consider the following 324-residue polypeptide: Phospho-N-acetylmuramoyl-pentapeptide-transferase (324 aa).

10 helical membrane passes run 5–25 (GLLV…PLFI), 52–72 (PTMG…IMAI), 77–97 (LGAE…IGFL), 122–142 (VIAI…YIMI), 149–169 (FELG…GSNA), 176–196 (LDGL…IIAV), 201–221 (FGVA…LVFN), 227–247 (VFMG…VAIL), 253–273 (LLVI…IQVI), and 302–322 (VVVT…YIGV).

Belongs to the glycosyltransferase 4 family. MraY subfamily. Requires Mg(2+) as cofactor.

The protein localises to the cell membrane. It catalyses the reaction UDP-N-acetyl-alpha-D-muramoyl-L-alanyl-gamma-D-glutamyl-meso-2,6-diaminopimeloyl-D-alanyl-D-alanine + di-trans,octa-cis-undecaprenyl phosphate = di-trans,octa-cis-undecaprenyl diphospho-N-acetyl-alpha-D-muramoyl-L-alanyl-D-glutamyl-meso-2,6-diaminopimeloyl-D-alanyl-D-alanine + UMP. The protein operates within cell wall biogenesis; peptidoglycan biosynthesis. Its function is as follows. Catalyzes the initial step of the lipid cycle reactions in the biosynthesis of the cell wall peptidoglycan: transfers peptidoglycan precursor phospho-MurNAc-pentapeptide from UDP-MurNAc-pentapeptide onto the lipid carrier undecaprenyl phosphate, yielding undecaprenyl-pyrophosphoryl-MurNAc-pentapeptide, known as lipid I. The polypeptide is Phospho-N-acetylmuramoyl-pentapeptide-transferase (Bacillus anthracis).